Reading from the N-terminus, the 260-residue chain is Pyridoxine 5'-phosphate synthase (260 aa).

2 residues coordinate 3-amino-2-oxopropyl phosphate: N7 and R18. The active-site Proton acceptor is H43. 1-deoxy-D-xylulose 5-phosphate is bound by residues R45 and H50. E83 functions as the Proton acceptor in the catalytic mechanism. T113 is a 1-deoxy-D-xylulose 5-phosphate binding site. H208 acts as the Proton donor in catalysis. 3-amino-2-oxopropyl phosphate-binding positions include D209 and 230 to 231 (GH).

This sequence belongs to the PNP synthase family. As to quaternary structure, homooctamer; tetramer of dimers.

It localises to the cytoplasm. The catalysed reaction is 3-amino-2-oxopropyl phosphate + 1-deoxy-D-xylulose 5-phosphate = pyridoxine 5'-phosphate + phosphate + 2 H2O + H(+). Its pathway is cofactor biosynthesis; pyridoxine 5'-phosphate biosynthesis; pyridoxine 5'-phosphate from D-erythrose 4-phosphate: step 5/5. Functionally, catalyzes the complicated ring closure reaction between the two acyclic compounds 1-deoxy-D-xylulose-5-phosphate (DXP) and 3-amino-2-oxopropyl phosphate (1-amino-acetone-3-phosphate or AAP) to form pyridoxine 5'-phosphate (PNP) and inorganic phosphate. This is Pyridoxine 5'-phosphate synthase from Leptospira biflexa serovar Patoc (strain Patoc 1 / Ames).